The chain runs to 837 residues: Endo-1,4-beta-xylanase Z (837 aa).

Positions 1 to 28 (MSRKLFSVLLVGLMLMTSLLVTISSTSA) are cleaved as a signal peptide. One can recognise a CBM6 domain in the interval 299–420 (TRIEAEDYDG…PVNIDWFTFG (122 aa)). Positions 424 to 492 (SSTGLGDLNG…ILRIITEFPG (69 aa)) constitute a Dockerin domain. Residues 512–833 (TISGNALRDY…KPAYNAIKEA (322 aa)) enclose the GH10 domain. Glu-645 functions as the Proton donor in the catalytic mechanism. The active-site Nucleophile is Glu-754. A disulfide bond links Cys-783 and Cys-789.

It belongs to the glycosyl hydrolase 10 (cellulase F) family.

It catalyses the reaction Endohydrolysis of (1-&gt;4)-beta-D-xylosidic linkages in xylans.. This chain is Endo-1,4-beta-xylanase Z (xynZ), found in Acetivibrio thermocellus (strain ATCC 27405 / DSM 1237 / JCM 9322 / NBRC 103400 / NCIMB 10682 / NRRL B-4536 / VPI 7372) (Clostridium thermocellum).